The primary structure comprises 198 residues: Sporulation cortex protein CoxA (198 aa).

A signal peptide spans 1–21 (MGKKMTIASLILMTAGLTACG). Positions 91-115 (PLATDGTYNNTNNRNMNRNAANNGY) are disordered. Residues 95–115 (DGTYNNTNNRNMNRNAANNGY) show a composition bias toward low complexity.

The protein resides in the spore cortex. This is Sporulation cortex protein CoxA (coxA) from Bacillus subtilis (strain 168).